We begin with the raw amino-acid sequence, 469 residues long: 3-isopropylmalate dehydratase large subunit (469 aa).

Residues C350, C410, and C413 each contribute to the [4Fe-4S] cluster site.

It belongs to the aconitase/IPM isomerase family. LeuC type 1 subfamily. As to quaternary structure, heterodimer of LeuC and LeuD. [4Fe-4S] cluster is required as a cofactor.

It catalyses the reaction (2R,3S)-3-isopropylmalate = (2S)-2-isopropylmalate. The protein operates within amino-acid biosynthesis; L-leucine biosynthesis; L-leucine from 3-methyl-2-oxobutanoate: step 2/4. Functionally, catalyzes the isomerization between 2-isopropylmalate and 3-isopropylmalate, via the formation of 2-isopropylmaleate. In Rhizobium leguminosarum bv. trifolii (strain WSM2304), this protein is 3-isopropylmalate dehydratase large subunit.